We begin with the raw amino-acid sequence, 195 residues long: Protein GrpE (195 aa).

Residues 1–18 (MDPKEKKTKQEEELKVDD) show a composition bias toward basic and acidic residues. Positions 1 to 41 (MDPKEKKTKQEEELKVDDIQDTVEGQSQNEEATEATEPLTA) are disordered.

This sequence belongs to the GrpE family. As to quaternary structure, homodimer.

It localises to the cytoplasm. In terms of biological role, participates actively in the response to hyperosmotic and heat shock by preventing the aggregation of stress-denatured proteins, in association with DnaK and GrpE. It is the nucleotide exchange factor for DnaK and may function as a thermosensor. Unfolded proteins bind initially to DnaJ; upon interaction with the DnaJ-bound protein, DnaK hydrolyzes its bound ATP, resulting in the formation of a stable complex. GrpE releases ADP from DnaK; ATP binding to DnaK triggers the release of the substrate protein, thus completing the reaction cycle. Several rounds of ATP-dependent interactions between DnaJ, DnaK and GrpE are required for fully efficient folding. In Bacteroides fragilis (strain ATCC 25285 / DSM 2151 / CCUG 4856 / JCM 11019 / LMG 10263 / NCTC 9343 / Onslow / VPI 2553 / EN-2), this protein is Protein GrpE.